The primary structure comprises 493 residues: Chitinase 1 (493 aa).

An N-terminal signal peptide occupies residues 1–20 (MISCNILGITIAAFITSTLA). Positions 27-318 (VNVMYYWGQN…HGSSAALGQA (292 aa)) constitute a GH18 domain. Residue Glu-164 is the Proton donor of the active site.

Belongs to the glycosyl hydrolase 18 family. Chitinase class III subfamily.

It catalyses the reaction Random endo-hydrolysis of N-acetyl-beta-D-glucosaminide (1-&gt;4)-beta-linkages in chitin and chitodextrins.. This chain is Chitinase 1 (CHI1), found in Rhizopus niveus.